We begin with the raw amino-acid sequence, 246 residues long: Probable transcriptional regulatory protein CLK_2466 (246 aa).

Belongs to the TACO1 family.

It localises to the cytoplasm. The sequence is that of Probable transcriptional regulatory protein CLK_2466 from Clostridium botulinum (strain Loch Maree / Type A3).